The chain runs to 276 residues: NH(3)-dependent NAD(+) synthetase (276 aa).

An ATP-binding site is contributed by 43-50 (GISGGVDS). Residue Asp49 participates in Mg(2+) binding. Arg146 contacts deamido-NAD(+). Thr166 lines the ATP pocket. Glu171 contacts Mg(2+). Lys179 and Asp186 together coordinate deamido-NAD(+). ATP is bound by residues Lys195 and Thr217. Position 266-267 (266-267 (HK)) interacts with deamido-NAD(+).

It belongs to the NAD synthetase family. In terms of assembly, homodimer.

It carries out the reaction deamido-NAD(+) + NH4(+) + ATP = AMP + diphosphate + NAD(+) + H(+). Its pathway is cofactor biosynthesis; NAD(+) biosynthesis; NAD(+) from deamido-NAD(+) (ammonia route): step 1/1. In terms of biological role, catalyzes the ATP-dependent amidation of deamido-NAD to form NAD. Uses ammonia as a nitrogen source. The polypeptide is NH(3)-dependent NAD(+) synthetase (Aliivibrio fischeri (strain ATCC 700601 / ES114) (Vibrio fischeri)).